An 877-amino-acid chain; its full sequence is Polycomb protein Scm (877 aa).

The disordered stretch occupies residues 1–57 (MSGGRDSSTSSGSNSAAPGASTNATSSASASASSTSTSASPGSTTSPASTQRQRGRP). Residues 7-50 (SSTSSGSNSAAPGASTNATSSASASASSTSTSASPGSTTSPAST) are compositionally biased toward low complexity. The segment at 54-93 (RGRPAKRATCTWCGEGKLPLQYVLPTQTGKKEFCSETCIA) adopts an FCS-type zinc-finger fold. Cysteine 63, cysteine 66, cysteine 87, and cysteine 91 together coordinate Zn(2+). MBT repeat units lie at residues 175-273 (FDWD…LQPP) and 281-382 (SSWP…MQPP). Disordered regions lie at residues 535-621 (NSRK…SNKV), 652-692 (TNTN…GGSA), and 713-735 (ANVK…ASLP). Threonine 546 carries the phosphothreonine modification. Phosphoserine occurs at positions 549 and 550. Positions 560–569 (QSNSATTSPS) are enriched in polar residues. Serine 585 bears the Phosphoserine mark. The span at 598–620 (ASQQNSNHSLNNNNNSASKSSNK) shows a compositional bias: low complexity. Residues 724–735 (SPTTLSSSASLP) are compositionally biased toward low complexity. In terms of domain architecture, SAM spans 806–876 (WTIEEVIQYI…KVNGRRNNLA (71 aa)).

This sequence belongs to the SCM family. As to quaternary structure, scm associates with the PRC1 core complex containing PSC, PC, PH and Sce/RING1. Forms homotypic and heterotypic interactions. Interacts with the SAM domain of ph-p via its SAM domain in vitro. Interacts with corto in vitro.

The protein localises to the nucleus. Polycomb group (PcG) protein. PcG proteins act by forming multiprotein complexes, which are required to maintain the transcriptionally repressive state of homeotic genes throughout development. PcG proteins are not required to initiate repression, but to maintain it during later stages of development. They probably act via the methylation of histones, rendering chromatin heritably changed in its expressibility. In Drosophila melanogaster (Fruit fly), this protein is Polycomb protein Scm.